A 644-amino-acid chain; its full sequence is Exoribonuclease 2 (644 aa).

Residues 189-516 enclose the RNB domain; that stretch reads REDLTSLDFV…NHRLLKAVIK (328 aa). One can recognise an S1 motif domain in the interval 561-643; it reads GTRFAAEIVD…ETRSIIARPV (83 aa).

This sequence belongs to the RNR ribonuclease family. RNase II subfamily.

It localises to the cytoplasm. The catalysed reaction is Exonucleolytic cleavage in the 3'- to 5'-direction to yield nucleoside 5'-phosphates.. Involved in mRNA degradation. Hydrolyzes single-stranded polyribonucleotides processively in the 3' to 5' direction. The sequence is that of Exoribonuclease 2 from Shigella flexneri serotype 5b (strain 8401).